A 432-amino-acid chain; its full sequence is Serine/threonine-protein phosphatase 2A activator 1 (432 aa).

Positions 322–432 (PYSKVEDEEP…MAPTKAPWAK (111 aa)) are disordered. A compositionally biased stretch (basic and acidic residues) spans 366-389 (TVERLARRDGQRAAREKEEREDRA). The segment covering 396–412 (TTGAPGATALPPTRAPG) has biased composition (low complexity).

It belongs to the PTPA-type PPIase family.

It localises to the cytoplasm. It is found in the nucleus. It carries out the reaction [protein]-peptidylproline (omega=180) = [protein]-peptidylproline (omega=0). PPIases accelerate the folding of proteins. It catalyzes the cis-trans isomerization of proline imidic peptide bonds in oligopeptides. Acts as a regulatory subunit for PP2A-like phosphatases modulating their activity or substrate specificity, probably by inducing a conformational change in the catalytic subunit, a direct target of the PPIase. Can reactivate inactive phosphatase PP2A-phosphatase methylesterase complexes (PP2Ai) in presence of ATP and Mg(2+) by dissociating the inactive form from the complex. The sequence is that of Serine/threonine-protein phosphatase 2A activator 1 (RRD1) from Yarrowia lipolytica (strain CLIB 122 / E 150) (Yeast).